A 341-amino-acid chain; its full sequence is Malate dehydrogenase, mitochondrial (341 aa).

NAD(+) is bound by residues 35–41 and Asp-61; that span reads GAAGGIG. Residues Arg-108 and Arg-114 each coordinate substrate. Residues Asn-121 and 144–146 each bind NAD(+); that span reads ITN. 2 residues coordinate substrate: Asn-146 and Arg-180. His-204 (proton acceptor) is an active-site residue. NAD(+) is bound at residue Met-255.

The protein belongs to the LDH/MDH superfamily. MDH type 1 family. As to quaternary structure, homodimer.

The protein resides in the mitochondrion matrix. It catalyses the reaction (S)-malate + NAD(+) = oxaloacetate + NADH + H(+). Its function is as follows. Catalyzes the reversible conversion of (S)-malate to oxaloacetate in the citric acid cycle. The chain is Malate dehydrogenase, mitochondrial from Caenorhabditis elegans.